The chain runs to 599 residues: Elongation factor 4 (599 aa).

A tr-type G domain is found at 2–184; it reads KNIRNFSIIA…RLVRDIPPPE (183 aa). GTP contacts are provided by residues 14-19 and 131-134; these read DHGKST and NKID.

Belongs to the TRAFAC class translation factor GTPase superfamily. Classic translation factor GTPase family. LepA subfamily.

It localises to the cell inner membrane. It catalyses the reaction GTP + H2O = GDP + phosphate + H(+). Required for accurate and efficient protein synthesis under certain stress conditions. May act as a fidelity factor of the translation reaction, by catalyzing a one-codon backward translocation of tRNAs on improperly translocated ribosomes. Back-translocation proceeds from a post-translocation (POST) complex to a pre-translocation (PRE) complex, thus giving elongation factor G a second chance to translocate the tRNAs correctly. Binds to ribosomes in a GTP-dependent manner. This Citrobacter koseri (strain ATCC BAA-895 / CDC 4225-83 / SGSC4696) protein is Elongation factor 4.